The primary structure comprises 219 residues: Interleukin-6 (219 aa).

The first 20 residues, methionine 1–glycine 20, serve as a signal peptide directing secretion. Cysteine 103 and cysteine 111 are joined by a disulfide.

This sequence belongs to the IL-6 superfamily. In terms of assembly, component of a hexamer of two molecules each of IL6, IL6R and IL6ST; first binds to IL6R to associate with the signaling subunit IL6ST. As to expression, expressed in spleen, gill and gastrointestinal tract, ovary and brain. Highest expression in ovary.

The protein resides in the secreted. Functionally, cytokine with a wide variety of biological functions in immunity, tissue regeneration, and metabolism. Binds to IL6R, then the complex associates to the signaling subunit IL6ST/gp130 to trigger the intracellular IL6-signaling pathway. The interaction with the membrane-bound IL6R and IL6ST stimulates 'classic signaling', whereas the binding of IL6 and soluble IL6R to IL6ST stimulates 'trans-signaling'. Alternatively, 'cluster signaling' occurs when membrane-bound IL6:IL6R complexes on transmitter cells activate IL6ST receptors on neighboring receiver cells. This is Interleukin-6 (il6) from Oncorhynchus mykiss (Rainbow trout).